We begin with the raw amino-acid sequence, 334 residues long: Glycerol-3-phosphate dehydrogenase [NAD(P)+] (334 aa).

NADPH is bound by residues Ser14, Tyr15, His35, and Lys109. 3 residues coordinate sn-glycerol 3-phosphate: Lys109, Gly138, and Thr140. Ala142 contributes to the NADPH binding site. 5 residues coordinate sn-glycerol 3-phosphate: Lys194, Asp247, Ser257, Arg258, and Asn259. Catalysis depends on Lys194, which acts as the Proton acceptor. Arg258 serves as a coordination point for NADPH. Residues Val282 and Glu284 each contribute to the NADPH site.

It belongs to the NAD-dependent glycerol-3-phosphate dehydrogenase family.

The protein resides in the cytoplasm. The enzyme catalyses sn-glycerol 3-phosphate + NAD(+) = dihydroxyacetone phosphate + NADH + H(+). It catalyses the reaction sn-glycerol 3-phosphate + NADP(+) = dihydroxyacetone phosphate + NADPH + H(+). It participates in membrane lipid metabolism; glycerophospholipid metabolism. Catalyzes the reduction of the glycolytic intermediate dihydroxyacetone phosphate (DHAP) to sn-glycerol 3-phosphate (G3P), the key precursor for phospholipid synthesis. The protein is Glycerol-3-phosphate dehydrogenase [NAD(P)+] of Psychromonas ingrahamii (strain DSM 17664 / CCUG 51855 / 37).